The following is a 336-amino-acid chain: Glyceraldehyde-3-phosphate dehydrogenase 1 (336 aa).

NAD(+)-binding positions include 13–14 and Asp-35; that span reads RI. A Phosphoserine modification is found at Ser-59. Arg-80 is a binding site for NAD(+). Ser-125 bears the Phosphoserine mark. D-glyceraldehyde 3-phosphate-binding positions include 151–153, Thr-182, 211–212, and Arg-234; these read SCT and TG. Cys-152 (nucleophile) is an active-site residue. Asn-316 contacts NAD(+).

The protein belongs to the glyceraldehyde-3-phosphate dehydrogenase family. Homotetramer.

Its subcellular location is the cytoplasm. The enzyme catalyses D-glyceraldehyde 3-phosphate + phosphate + NAD(+) = (2R)-3-phospho-glyceroyl phosphate + NADH + H(+). Its pathway is carbohydrate degradation; glycolysis; pyruvate from D-glyceraldehyde 3-phosphate: step 1/5. The sequence is that of Glyceraldehyde-3-phosphate dehydrogenase 1 (tdh1) from Schizosaccharomyces pombe (strain 972 / ATCC 24843) (Fission yeast).